Consider the following 231-residue polypeptide: ATP phosphoribosyltransferase (231 aa).

Belongs to the ATP phosphoribosyltransferase family. Short subfamily. As to quaternary structure, heteromultimer composed of HisG and HisZ subunits.

It is found in the cytoplasm. The enzyme catalyses 1-(5-phospho-beta-D-ribosyl)-ATP + diphosphate = 5-phospho-alpha-D-ribose 1-diphosphate + ATP. It participates in amino-acid biosynthesis; L-histidine biosynthesis; L-histidine from 5-phospho-alpha-D-ribose 1-diphosphate: step 1/9. Its function is as follows. Catalyzes the condensation of ATP and 5-phosphoribose 1-diphosphate to form N'-(5'-phosphoribosyl)-ATP (PR-ATP). Has a crucial role in the pathway because the rate of histidine biosynthesis seems to be controlled primarily by regulation of HisG enzymatic activity. The protein is ATP phosphoribosyltransferase of Brucella anthropi (strain ATCC 49188 / DSM 6882 / CCUG 24695 / JCM 21032 / LMG 3331 / NBRC 15819 / NCTC 12168 / Alc 37) (Ochrobactrum anthropi).